The primary structure comprises 496 residues: MERRNPSERGVPAGFSGHASVESGCETQESPATVVFRPPGDNTDGGAAAAAGGSQAAAAGAEPMEPESRPGPSGMNVVQVAELYPELRRILTITEDGQGLKGVKRERGACEATEEARNLAFSLMTRHRPECITFQQIKDNCANELDLLAQKYSIEQLTTYWLQPGDDFEEAIRVYAKVALRPDCKYKISKLVNIRNCCYISGNGAEVEIDTEDRVAFRCSMINMWPGVLGMDGVVIMNVRFTGPNFSGTVFLANTNLILHGVSFYGFNNTCVEAWTDVRVRGCAFYCCWKGVVCRPKSRASIKKCLFERCTLGILSEGNSRVRHNVASDCGCFMLVKSVAVIKHNMVCGNCEDRASQMLTCSDGNCHLLKTIHVASHSRKAWPVFEHNILTRCSLHLGNRRGVFLPYQCNLSHTKILLEPESMSKVNLNGVFDMTMKIWKVLRYDETRTRCRPCECGGKHIRNQPVMLDVTEELRPDHLVLACTRAEFGSSDEDTD.

The disordered stretch occupies residues 1 to 74 (MERRNPSERG…EPESRPGPSG (74 aa)). The segment covering 45–61 (GGAAAAAGGSQAAAAGA) has biased composition (low complexity). Residues Ser-490 and Ser-491 each carry the phosphoserine modification. Thr-495 carries the phosphothreonine modification.

Belongs to the adenoviridae E1B 55 kDa protein family. As to quaternary structure, interacts with host PML-4 and PML-5; this interaction promotes efficient subnuclear targeting of E1B-55K to PML nuclear bodies. Interacts with E4-ORF3 protein. Interacts with E4-ORF6 protein. In terms of processing, phosphorylation at the C-terminus affects the subcellular location.

The protein localises to the host nucleus. It is found in the host cytoplasm. Its function is as follows. Plays a major role to prevent cellular inhibition of viral genome replication. Assembles an SCF-like E3 ubiquitin ligase complex based on the cellular proteins ELOB, ELOC, CUL5 and RBX1, in cooperation with viral E4orf6. This viral RING-type ligase ubiquitinates cellular substrates and targets them to proteasomal degradation: TP53/p53, LIG4, MRE11-RAD50-NBS1 (MRN) complex, ITGA3, DAXX and BLM. E1B-55K probably acts as the substrate-specific adapter of the SCF-like E3 ubiquitin ligase complex. Degradation of host TP53/p53 activity is essential for preventing E1A-induced TP53 accumulation that would otherwise lead to cell apoptosis and growth arrest. E1B-55K also inactivates TP53 transcription-factor activity by binding its transactivation domain. E1B-55K also functions as a SUMO1 E3 ligase for TP53 which causes the latter to be sequestered in promyelocytic leukemia (PML) nuclear bodies thereby contributing to maximal inhibition of TP53 function. This Homo sapiens (Human) protein is E1B 55 kDa protein.